The primary structure comprises 389 residues: Glutamate 5-kinase (389 aa).

Residue Lys-17 participates in ATP binding. Ser-57, Asp-144, and Asn-156 together coordinate substrate. ATP is bound at residue 176–177; that stretch reads SD. Residues 282–359 enclose the PUA domain; sequence AGEIHVDAGA…NEIETILGYV (78 aa).

This sequence belongs to the glutamate 5-kinase family.

The protein resides in the cytoplasm. The catalysed reaction is L-glutamate + ATP = L-glutamyl 5-phosphate + ADP. The protein operates within amino-acid biosynthesis; L-proline biosynthesis; L-glutamate 5-semialdehyde from L-glutamate: step 1/2. Its function is as follows. Catalyzes the transfer of a phosphate group to glutamate to form L-glutamate 5-phosphate. This Agrobacterium fabrum (strain C58 / ATCC 33970) (Agrobacterium tumefaciens (strain C58)) protein is Glutamate 5-kinase.